The following is a 1032-amino-acid chain: Kinesin heavy chain isoform 5A (1032 aa).

Residue alanine 2 is modified to N-acetylalanine. The 319-residue stretch at 9-327 folds into the Kinesin motor domain; that stretch reads SIKVLCRFRP…LMFGQRAKTI (319 aa). 86 to 93 contacts ATP; that stretch reads GQTSSGKT. Residues 174 to 315 form a microtubule-binding region; sequence VSSPEEILDV…PSSYNDAETK (142 aa). A necessary for interaction with ZFYVE27 region spans residues 271-361; the sequence is EGTKSYVPYR…KTKAQKETIA (91 aa). The stretch at 331–906 forms a coiled coil; the sequence is ASVNLELTAE…VDRIKEAVRY (576 aa). An interaction with BICD2 region spans residues 353-1032; sequence TKAQKETIAK…FPLHQETAAS (680 aa). Threonine 397 bears the Phosphothreonine mark. Disordered stretches follow at residues 906 to 939 and 978 to 1010; these read YKSSGKRGHSAQIAKPVRPGHYPASSPTNPYGTR and SGATSSGGPLASYQKANMDNGNATDINDNRSDL. Positions 907-1032 are globular; that stretch reads KSSGKRGHSA…FPLHQETAAS (126 aa). A compositionally biased stretch (low complexity) spans 978–989; the sequence is SGATSSGGPLAS. A compositionally biased stretch (polar residues) spans 991–1003; sequence QKANMDNGNATDI.

The protein belongs to the TRAFAC class myosin-kinesin ATPase superfamily. Kinesin family. Kinesin subfamily. Oligomer composed of two heavy chains and two light chains. Interacts with GRIP1. Interacts with FMR1 (via C-terminus); this interaction is increased in a mGluR-dependent manner. Interacts with ZFYVE27. Interacts with VAPA, VAPB, SURF4, RAB11A (GDP-bound form), RAB11B (GDP-bound form) and RTN3 in a ZFYVE27-dependent manner. Interacts with BORCS5. Interacts with BICD2. Interacts with DTNB. In terms of tissue distribution, distributed throughout the CNS but is highly enriched in subsets of neurons.

It localises to the cytoplasm. Its subcellular location is the perinuclear region. It is found in the cytoskeleton. The protein resides in the perikaryon. It carries out the reaction ATP + H2O + a kinesin associated with a microtubule at position (n) = ADP + phosphate a kinesin associated with a microtubule at position (n+1, toward the plus end).. Functionally, microtubule-dependent motor required for slow axonal transport of neurofilament proteins (NFH, NFM and NFL). Can induce formation of neurite-like membrane protrusions in non-neuronal cells in a ZFYVE27-dependent manner. The ZFYVE27-KIF5A complex contributes to the vesicular transport of VAPA, VAPB, SURF4, RAB11A, RAB11B and RTN3 proteins in neurons. Required for anterograde axonal transportation of MAPK8IP3/JIP3 which is essential for MAPK8IP3/JIP3 function in axon elongation. The protein is Kinesin heavy chain isoform 5A of Homo sapiens (Human).